Here is a 69-residue protein sequence, read N- to C-terminus: Large ribosomal subunit protein uL29 (69 aa).

It belongs to the universal ribosomal protein uL29 family.

The protein is Large ribosomal subunit protein uL29 of Carboxydothermus hydrogenoformans (strain ATCC BAA-161 / DSM 6008 / Z-2901).